A 128-amino-acid polypeptide reads, in one-letter code: Fatty acid binding protein 1-B.1 (128 aa).

This sequence belongs to the calycin superfamily. Fatty-acid binding protein (FABP) family. Expressed in the yolk syncytial layer (YSL) and subsequently in the intestinal bulb in developing embryos and larvae. In adults, expressed in the intestine.

The protein localises to the cytoplasm. Binds free fatty acids and their coenzyme A derivatives, bilirubin, and some other small molecules in the cytoplasm. May be involved in intracellular lipid transport. This Danio rerio (Zebrafish) protein is Fatty acid binding protein 1-B.1 (fabp1b.1).